Reading from the N-terminus, the 303-residue chain is N-acetyl-D-glucosamine kinase (303 aa).

ATP is bound by residues 4–11 and 133–140; these read GFDIGGTK and GVGGGLIF. Positions 157, 177, 179, and 184 each coordinate Zn(2+).

It belongs to the ROK (NagC/XylR) family. NagK subfamily.

The enzyme catalyses N-acetyl-D-glucosamine + ATP = N-acetyl-D-glucosamine 6-phosphate + ADP + H(+). It functions in the pathway cell wall biogenesis; peptidoglycan recycling. In terms of biological role, catalyzes the phosphorylation of N-acetyl-D-glucosamine (GlcNAc) derived from cell-wall degradation, yielding GlcNAc-6-P. The chain is N-acetyl-D-glucosamine kinase from Escherichia coli O157:H7.